A 1267-amino-acid chain; its full sequence is Clustered mitochondria protein homolog (1267 aa).

TPR repeat units follow at residues 64–102, 420–453, 716–749, 795–830, 904–939, 1010–1043, and 1138–1171; these read YNLK…KPYN, YSFV…LNML, EAHE…MIKE, LVPL…IPAL, RSIC…KSRA, AEKY…YERV, and AYIK…FTKE. Positions 329–586 constitute a Clu domain; the sequence is PTNGPDYLRT…NTYPLDVEFA (258 aa). A compositionally biased stretch (polar residues) spans 1203–1219; that stretch reads QQDQTAASGLKQQPQKS. The disordered stretch occupies residues 1203–1267; it reads QQDQTAASGL…KSKSKGKNKK (65 aa). The segment covering 1224 to 1239 has biased composition (basic and acidic residues); it reads NKKETTNPDLADKSVD. Residues 1254–1267 show a composition bias toward basic residues; it reads KTTKKSKSKGKNKK.

It belongs to the CLU family. In terms of assembly, may associate with the eukaryotic translation initiation factor 3 (eIF-3) complex.

The protein resides in the cytoplasm. In terms of biological role, mRNA-binding protein involved in proper cytoplasmic distribution of mitochondria. The polypeptide is Clustered mitochondria protein homolog (Candida glabrata (strain ATCC 2001 / BCRC 20586 / JCM 3761 / NBRC 0622 / NRRL Y-65 / CBS 138) (Yeast)).